Reading from the N-terminus, the 293-residue chain is Release factor glutamine methyltransferase (293 aa).

S-adenosyl-L-methionine contacts are provided by residues 130–134 (GTGSG), Asp153, Trp182, and Asn199. A substrate-binding site is contributed by 199–202 (NPPY).

The protein belongs to the protein N5-glutamine methyltransferase family. PrmC subfamily.

It catalyses the reaction L-glutaminyl-[peptide chain release factor] + S-adenosyl-L-methionine = N(5)-methyl-L-glutaminyl-[peptide chain release factor] + S-adenosyl-L-homocysteine + H(+). Methylates the class 1 translation termination release factors RF1/PrfA and RF2/PrfB on the glutamine residue of the universally conserved GGQ motif. The chain is Release factor glutamine methyltransferase from Prochlorococcus marinus (strain SARG / CCMP1375 / SS120).